Reading from the N-terminus, the 147-residue chain is Hemoglobin subunit beta (147 aa).

V2 is modified (N-acetylvaline). In terms of domain architecture, Globin spans 3-147 (HLTGEEKAAV…VANALAHKYH (145 aa)). At T13 the chain carries Phosphothreonine. At S45 the chain carries Phosphoserine. K60 carries the post-translational modification N6-acetyllysine. H64 serves as a coordination point for heme b. K83 is subject to N6-acetyllysine. H93 serves as a coordination point for heme b. C94 is subject to S-nitrosocysteine. K145 is modified (N6-acetyllysine).

The protein belongs to the globin family. In terms of assembly, heterotetramer of two alpha chains and two beta chains. In terms of tissue distribution, red blood cells.

Its function is as follows. Involved in oxygen transport from the lung to the various peripheral tissues. This chain is Hemoglobin subunit beta (HBB), found in Ailuropoda melanoleuca (Giant panda).